We begin with the raw amino-acid sequence, 353 residues long: Jasmonate-induced oxygenase 4 (353 aa).

One can recognise a Fe2OG dioxygenase domain in the interval 202–302 (VGASLRTNFY…RVSLAFFYNP (101 aa)). Residue Arg-207 coordinates jasmonate. 2 residues coordinate 2-oxoglutarate: Asn-209 and Tyr-211. The Fe cation site is built by His-226, Asp-228, and His-283. Positions 293 and 295 each coordinate 2-oxoglutarate. Jasmonate contacts are provided by Arg-332 and Arg-336.

Belongs to the iron/ascorbate-dependent oxidoreductase family. The cofactor is L-ascorbate. Fe(2+) is required as a cofactor.

It carries out the reaction jasmonate + 2-oxoglutarate + O2 = (1R,2R)-12-hydroxyjasmonate + succinate + CO2. In terms of biological role, 2-oxoglutarate-dependent dioxygenase involved in the oxidation of jasmonate (JA), a stress-induced phytohormone synthesized in response to attack by pathogens and herbivores, which triggers the activation of defense responses via the JA-mediated signaling pathway. Converts JA to 12-hydroxyjasmonate (12OH-JA), an inactive form of JA. Is specific to free JA, and cannot oxidize the bioactive form jasmonoyl-L-isoleucine (JA-Ile) or other JA-amino acid conjugates. Prevents over-accumulation of JA and indirectly its bioactive form JA-Ile under stress response. Acts as a negative regulator of JA-mediated defense signaling, by contributing to 12OH-JA accumulation, which represses JA defense responses upon infection by the fungal pathogen Botrytis cinerea. Acts as a negative regulator of JA-mediated defense responses upon infestation by the herbivorous caterpillar Mamestra brassicae. In Arabidopsis thaliana (Mouse-ear cress), this protein is Jasmonate-induced oxygenase 4.